The primary structure comprises 192 residues: Early nodulin-like protein 7 (192 aa).

The N-terminal stretch at 1-27 (MMMMMMRSTCNLTLMLCICALVVASMA) is a signal peptide. One can recognise a Phytocyanin domain in the interval 32–134 (RDFKVGDEFG…GQRLIVEVMH (103 aa)). 3 N-linked (GlcNAc...) asparagine glycosylation sites follow: N48, N89, and N101. A disulfide bridge connects residues C88 and C122. S166 is lipidated: GPI-anchor amidated serine. A propeptide spans 167-192 (AASSLPTACLLIPLFLTIASFRFISY) (removed in mature form).

This sequence belongs to the early nodulin-like (ENODL) family. Mostly expressed in flowers, and, to a lower extent, in seeds, but barely in seedlings, stems, leaves and roots.

Its subcellular location is the cell membrane. May act as a carbohydrate transporter. The sequence is that of Early nodulin-like protein 7 from Arabidopsis thaliana (Mouse-ear cress).